Here is a 390-residue protein sequence, read N- to C-terminus: Heme chaperone HemW (390 aa).

The Radical SAM core domain occupies 15-254 (PMPGQPFGVY…DARLSAAGFA (240 aa)). Position 24 (Y24) interacts with S-adenosyl-L-methionine. Positions 30, 34, and 37 each coordinate [4Fe-4S] cluster. S-adenosyl-L-methionine is bound by residues G82, 83–84 (GT), E115, Q142, R154, and D179.

The protein belongs to the anaerobic coproporphyrinogen-III oxidase family. HemW subfamily. [4Fe-4S] cluster is required as a cofactor.

It is found in the cytoplasm. In terms of biological role, probably acts as a heme chaperone, transferring heme to an unknown acceptor. Binds one molecule of heme per monomer, possibly covalently. Binds 1 [4Fe-4S] cluster. The cluster is coordinated with 3 cysteines and an exchangeable S-adenosyl-L-methionine. The chain is Heme chaperone HemW from Mycobacterium tuberculosis (strain CDC 1551 / Oshkosh).